The chain runs to 209 residues: Guanylate kinase (209 aa).

One can recognise a Guanylate kinase-like domain in the interval 5–184; it reads GLLIVFSGPS…AAERVKRVIE (180 aa). Residue 12–19 coordinates ATP; the sequence is GPSGVGKG.

This sequence belongs to the guanylate kinase family.

Its subcellular location is the cytoplasm. It carries out the reaction GMP + ATP = GDP + ADP. Essential for recycling GMP and indirectly, cGMP. This is Guanylate kinase from Streptococcus agalactiae serotype Ia (strain ATCC 27591 / A909 / CDC SS700).